Here is a 231-residue protein sequence, read N- to C-terminus: Ion-translocating oxidoreductase complex subunit E (231 aa).

Transmembrane regions (helical) follow at residues 18–38, 39–59, 63–83, 86–106, 125–145, and 182–202; these read ALVQ…ATNA, LGLG…ISTL, TPSE…VSAV, LINA…PLIV, ALSA…MFVL, and PFLL…MLAG.

The protein belongs to the NqrDE/RnfAE family. In terms of assembly, the complex is composed of six subunits: RsxA, RsxB, RsxC, RsxD, RsxE and RsxG.

It is found in the cell inner membrane. Part of a membrane-bound complex that couples electron transfer with translocation of ions across the membrane. Required to maintain the reduced state of SoxR. This is Ion-translocating oxidoreductase complex subunit E from Escherichia coli O6:K15:H31 (strain 536 / UPEC).